A 118-amino-acid chain; its full sequence is Large ribosomal subunit protein bL20 (118 aa).

Belongs to the bacterial ribosomal protein bL20 family.

Its function is as follows. Binds directly to 23S ribosomal RNA and is necessary for the in vitro assembly process of the 50S ribosomal subunit. It is not involved in the protein synthesizing functions of that subunit. The sequence is that of Large ribosomal subunit protein bL20 from Azotobacter vinelandii (strain DJ / ATCC BAA-1303).